The sequence spans 91 residues: Antitoxin RelJ (91 aa).

Belongs to the phD/YefM antitoxin family. In terms of assembly, homodimer.

Functionally, antitoxin component of a type II toxin-antitoxin (TA) system. A probable antitoxin for the putative mRNA interferase RelK. The polypeptide is Antitoxin RelJ (relJ) (Mycobacterium tuberculosis (strain CDC 1551 / Oshkosh)).